The chain runs to 465 residues: Putative apoptosis inhibitor ORF106 (465 aa).

One copy of the BIR repeat lies at 291–357 (RECSFSTWPK…MEKETCGWLE (67 aa)). The segment covering 373–382 (EGGEDKEEDG) has biased composition (acidic residues). Residues 373-393 (EGGEDKEEDGGGGGVIEFPKN) are disordered. The RING-type zinc-finger motif lies at 405-447 (CKACYERKADIAFIPCGHVFSCNICTMEMFASYKKKKRCPMCR).

The polypeptide is Putative apoptosis inhibitor ORF106 (Magallana gigas (Pacific oyster)).